We begin with the raw amino-acid sequence, 239 residues long: Large ribosomal subunit protein bL25 (239 aa).

Residues 211–239 are disordered; it reads KGKKDKEDEEAEKGTSVASPTTATGGTKK. Residues 226–239 are compositionally biased toward polar residues; sequence SVASPTTATGGTKK.

This sequence belongs to the bacterial ribosomal protein bL25 family. CTC subfamily. In terms of assembly, part of the 50S ribosomal subunit; part of the 5S rRNA/L5/L18/L25 subcomplex. Contacts the 5S rRNA. Binds to the 5S rRNA independently of L5 and L18.

This is one of the proteins that binds to the 5S RNA in the ribosome where it forms part of the central protuberance. In Endomicrobium trichonymphae, this protein is Large ribosomal subunit protein bL25.